A 205-amino-acid polypeptide reads, in one-letter code: Arginine exporter protein ArgO (205 aa).

6 helical membrane passes run 1 to 21, 37 to 57, 68 to 88, 112 to 132, 147 to 167, and 182 to 202; these read MLAVFLQGFALSAAMILPLGP, LMVASLCALSDIVLICGGIFG, LLALVTWGGVAFLLWYGWGAF, VVTMLAVTWLNPHVYLDTFVV, WFALGAVSASVVWFFALALLA, and IINTLVGVVMWGIALQLAWQG.

The protein belongs to the LysE/ArgO transporter (TC 2.A.75) family.

The protein resides in the cell inner membrane. The catalysed reaction is L-arginine(in) = L-arginine(out). Its function is as follows. Involved in the export of arginine. Important to control the intracellular level of arginine and the correct balance between arginine and lysine. The chain is Arginine exporter protein ArgO from Serratia proteamaculans (strain 568).